A 62-amino-acid polypeptide reads, in one-letter code: Large ribosomal subunit protein uL30 (62 aa).

The protein belongs to the universal ribosomal protein uL30 family. Part of the 50S ribosomal subunit.

The polypeptide is Large ribosomal subunit protein uL30 (Paracoccus denitrificans (strain Pd 1222)).